The chain runs to 298 residues: Peroxisomal 2,4-dienoyl-CoA reductase [(3E)-enoyl-CoA-producing] (298 aa).

19-24 (GGGSGI) lines the NADP(+) pocket. R44 is a binding site for substrate. D69 is a binding site for NADP(+). Residues R71, F101, and 109 to 111 (SPN) each bind substrate. Residues K173 and 200-206 (PGPIGGT) contribute to the NADP(+) site. The segment at 279 to 298 (SRAVEKRSRAKPVGLPTSKL) is disordered. The short motif at 296-298 (SKL) is the Microbody targeting signal element.

It belongs to the short-chain dehydrogenases/reductases (SDR) family. 2,4-dienoyl-CoA reductase subfamily.

It localises to the peroxisome. It catalyses the reaction a (2E,4Z)-dienoyl-CoA + NADPH + H(+) = a 4,5-saturated-(3E)-enoyl-CoA + NADP(+). It carries out the reaction a (2E,4E)-dienoyl-CoA + NADPH + H(+) = a 4,5-saturated-(3E)-enoyl-CoA + NADP(+). In terms of biological role, auxiliary enzyme of beta-oxidation. Participates in the degradation of unsaturated fatty enoyl-CoA esters having double bonds in both even- and odd-numbered positions in peroxisome. Catalyzes the NADP-dependent reduction of 2,4-dienoyl-CoA to yield trans-3-enoyl-CoA. The protein is Peroxisomal 2,4-dienoyl-CoA reductase [(3E)-enoyl-CoA-producing] of Arabidopsis thaliana (Mouse-ear cress).